Here is a 391-residue protein sequence, read N- to C-terminus: Putative 12-oxophytodienoate reductase 6 (391 aa).

Residues 42-44 (PMT), A75, and Q117 each bind FMN. 189-192 (HGAN) contacts substrate. The active-site Proton donor is the Y194. An FMN-binding site is contributed by R241. Residue R282 participates in substrate binding. Residues G312 and 333 to 334 (GR) each bind FMN. The tract at residues 372–391 (YPFLDEHHHDDDDDSNAPSA) is disordered. Residues 382–391 (DDDDSNAPSA) are compositionally biased toward acidic residues.

The protein belongs to the NADH:flavin oxidoreductase/NADH oxidase family. FMN serves as cofactor.

Putative oxophytodienoate reductase that may be involved in the biosynthesis or metabolism of oxylipin signaling molecules. The sequence is that of Putative 12-oxophytodienoate reductase 6 (OPR6) from Oryza sativa subsp. japonica (Rice).